The following is a 1071-amino-acid chain: SLIT-ROBO Rho GTPase-activating protein 2 (1071 aa).

The 304-residue stretch at Lys-22–Asp-325 folds into the F-BAR domain. The span at Leu-181–Thr-203 shows a compositional bias: basic and acidic residues. A disordered region spans residues Leu-181 to Ala-211. Ser-206 bears the Phosphoserine mark. Residues Gln-363–Ile-401 adopt a coiled-coil conformation. A phosphoserine mark is found at Ser-427, Ser-500, Ser-691, and Ser-695. One can recognise a Rho-GAP domain in the interval Ala-489–Phe-679. A disordered region spans residues Cys-700–Asp-726. A compositionally biased stretch (polar residues) spans Gly-705–Val-717. Residue Ser-724 is modified to Phosphoserine. The region spanning Cys-728–Thr-787 is the SH3 domain. Ser-795 carries the post-translational modification Phosphoserine. Disordered regions lie at residues Ser-795–Ser-819 and Arg-838–Gln-918. Positions His-855–Gly-868 are enriched in low complexity. Polar residues-rich tracts occupy residues Arg-874 to Leu-885 and Gly-897 to His-907. Residue Ser-916 is modified to Phosphoserine. Position 927 is a symmetric dimethylarginine; by PRMT5 (Arg-927). Ser-930 is modified (phosphoserine). Positions Glu-940–His-968 form a coiled coil. The disordered stretch occupies residues Pro-984–Ala-1012. A phosphoserine mark is found at Ser-990, Ser-994, Ser-1013, and Ser-1027. Positions Lys-1029–Val-1071 are disordered. The span at Pro-1047 to Val-1071 shows a compositional bias: polar residues.

Homodimer. Forms a heterooligomer with SRGAP1 and SRGAP3 through its F-BAR domain. Interacts (via SH3 domain) with GPHN. Interacts (via SH3 domain) with FMNL1 (activated by RAC1); regulates the actin filament severing activity of FMNL1 and actin dynamics. Interacts (via SH3 domain) with FMNL3. Interacts with RAC1; specifically stimulates RAC1 GTPase activity. Interacts (via F-BAR domain) with HOMER1. Interacts with ROBO1 and ROBO2. Interacts with FASLG. Interacts with PRMT5. In terms of processing, methylation at Arg-927 is required for the stimulation of cell migration, dimerization and localization at the plasma membrane protrusions.

It localises to the cell membrane. The protein localises to the cell projection. Its subcellular location is the dendritic spine. It is found in the postsynaptic density. The protein resides in the postsynaptic cell membrane. It localises to the lamellipodium. The protein localises to the cytoplasmic vesicle. Its subcellular location is the phagosome. It is found in the nucleus. The protein resides in the cytoplasm. It localises to the cytosol. Postsynaptic RAC1 GTPase activating protein (GAP) that plays a key role in neuronal morphogenesis and migration mainly during development of the cerebral cortex. Regulates excitatory and inhibitory synapse maturation and density in cortical pyramidal neurons. SRGAP2/SRGAP2A limits excitatory and inhibitory synapse density through its RAC1-specific GTPase activating activity, while it promotes maturation of both excitatory and inhibitory synapses through its ability to bind to the postsynaptic scaffolding protein HOMER1 at excitatory synapses, and the postsynaptic protein GPHN at inhibitory synapses. Mechanistically, acts by binding and deforming membranes, thereby regulating actin dynamics to regulate cell migration and differentiation. Promotes cell repulsion and contact inhibition of locomotion: localizes to protrusions with curved edges and controls the duration of RAC1 activity in contact protrusions. In non-neuronal cells, may also play a role in cell migration by regulating the formation of lamellipodia and filopodia. The polypeptide is SLIT-ROBO Rho GTPase-activating protein 2 (Mus musculus (Mouse)).